Reading from the N-terminus, the 1015-residue chain is MAHIYRLLLLLLSNLWFSAAAQNQSETEWPLHDNGLSKVVQWDHYSFQVNGQRIFIFSGEFHYWRIPVPELWRDILEKVKATGFTAFAFYSSWAYHAPNNRTVDFSTGARDITPIFELAKELGMYMIVRPGPYVNAEASAGGFPLWLTTGEYGSLRNDDPRYTAAWTPYFANMSQITSKYQVTDGHNTLVYQIENEYGQQWIGDPKDRNPNKTAVAYMELLEASALENGITVPLTSNDPNMNSKSWGSDWSNAGGNVDVAGLDSYPSCWTCDVSQCTSTNGEYVPYKVIDYYDYFQEVQPTLPSFMPEFQGGSYNPWAGPEGGCPQDTGAEFANLFYRWNIGQRVTAMSLYMLYGGTNWGAIAAPVTATSYDYSAPISEDRSIGAKYSETKLLALFTRTAKDLTMTEAIGNGTQYTTNTAVRAFELRNPQTNAGFYVTFHNDTTVGGNQAFKLHVNTSVGALTVPKNEGVIQLNGHQSKIIVTDFTLGKRTLLYSTAEVLTYAVFENRPTLVLWVPTGESGEFAIKGTKSGKVENGDGCSGINFKREKDYLVVNFSQAKGLSVLRLDNGVRVVLLDKAAAYRFWAPALTDDPIVQETETVLVHGPYLVRSASVSKSTLALRGDSVEKTTLEIFAPHSVRKITWNGKEVKTSQTPYGSLKATLAAPPTIKLPALTSWRSNDSLPERLPSYDDSGPAWIEANHMTTSNPSPPATLPVLYADEYGFHNGVRLWRGYFNGSASGVFLNIQGGSAFGWSAWLNGHFLDSHLGTATTSQANKTLTFSSSILNPTENVLLIVHDDTGHDQTTGALNPRGIIEARLLSNDTSSPAPGFTQWRIAGTAGGESNLDPIRGVFNEDGLFAERMGWHLPGFDDSAWTPENSTTSASSALSFTGATVRFFRTVVPLDIPAGLDVSISFVLSTPSAAPKGYRAQLFVNGYQYGRYNPHIGNQVVFPVPPGILDYQGDNTIGLAVWAQTEEGAGIQVDWKVNYVADSSLSVAGFGKGLRPGWTEERLKFA.

Positions 1–21 are cleaved as a signal peptide; sequence MAHIYRLLLLLLSNLWFSAAA. The N-linked (GlcNAc...) asparagine glycan is linked to N23. Position 90 (Y90) interacts with substrate. Residue N100 is glycosylated (N-linked (GlcNAc...) asparagine). Substrate contacts are provided by N135, A136, and E137. N172 carries N-linked (GlcNAc...) asparagine glycosylation. N195 contributes to the substrate binding site. E196 acts as the Proton donor in catalysis. N211 carries an N-linked (GlcNAc...) asparagine glycan. Position 265 (Y265) interacts with substrate. An intrachain disulfide couples C271 to C324. E308 functions as the Nucleophile in the catalytic mechanism. Y373 is a binding site for substrate. N411, N441, N456, N554, N679, N735, N775, N821, and N878 each carry an N-linked (GlcNAc...) asparagine glycan.

This sequence belongs to the glycosyl hydrolase 35 family.

It is found in the secreted. The enzyme catalyses Hydrolysis of terminal non-reducing beta-D-galactose residues in beta-D-galactosides.. Cleaves beta-linked terminal galactosyl residues from gangliosides, glycoproteins, and glycosaminoglycans. The protein is Probable beta-galactosidase B (lacB) of Neosartorya fischeri (strain ATCC 1020 / DSM 3700 / CBS 544.65 / FGSC A1164 / JCM 1740 / NRRL 181 / WB 181) (Aspergillus fischerianus).